The following is a 406-amino-acid chain: Type II secretion system protein F (406 aa).

Residues 1-171 are Cytoplasmic-facing; that stretch reads MAAFEYKALD…KMRSKLQQAM (171 aa). The Ca(2+) site is built by E97, E151, and D155. The helical transmembrane segment at 172-192 threads the bilayer; it reads IYPVVLVVFAVGIVAFLLAAV. Over 193 to 223 the chain is Periplasmic; it reads VPKIVGQFVQMGQALPASTQFLLDASDFLQH. The helical transmembrane segment at 224-244 threads the bilayer; sequence WGISLLVGLLMLIYLVRWLLT. Residues 245–368 lie on the Cytoplasmic side of the membrane; the sequence is KPDIRLRWDR…QDNSFESTVN (124 aa). The chain crosses the membrane as a helical span at residues 369–389; the sequence is IALGIFTPALIALMAGMVLFI. Over 390–406 the chain is Periplasmic; it reads VMATLMPILEMNNLMSR.

Belongs to the GSP F family. In terms of assembly, type II secretion system is composed of four main components: the outer membrane complex, the inner membrane complex, the cytoplasmic secretion ATPase and the periplasm-spanning pseudopilus. Homodimer. Interacts with EpsE/GspE and EpsL/GspL components.

The protein resides in the cell inner membrane. Its function is as follows. Component of the type II secretion system inner membrane complex required for the energy-dependent secretion of extracellular factors such as proteases and toxins from the periplasm. The polypeptide is Type II secretion system protein F (epsF) (Vibrio cholerae serotype O1 (strain ATCC 39315 / El Tor Inaba N16961)).